The primary structure comprises 1139 residues: GRIP and coiled-coil domain-containing protein (1139 aa).

The segment at 366–388 is disordered; the sequence is NDDSQINNNVSNKVNSPDDDPNT. Over residues 369-380 the composition is skewed to polar residues; that stretch reads SQINNNVSNKVN. 2 coiled-coil regions span residues 472–648 and 758–877; these read VTKL…INNE and LYIL…ETQQ. Residues 1004–1024 form a disordered region; the sequence is NEQENDNNNNNNNNNNNNNVE. The segment covering 1009–1022 has biased composition (low complexity); the sequence is DNNNNNNNNNNNNN. A coiled-coil region spans residues 1043–1084; it reads YKKIRKKLETYEILLNEQQEGKKKMTEEINSLKNQVKNYESI. A GRIP domain is found at 1084 to 1135; sequence INGNYQHIIYQKNILSNFIAQIPSRIQVDDYVSVIFNSFNFSNQEIEAINIK.

This chain is GRIP and coiled-coil domain-containing protein, found in Plasmodium falciparum (isolate 3D7).